The primary structure comprises 331 residues: Beta-ketoacyl-[acyl-carrier-protein] synthase III (331 aa).

Catalysis depends on residues cysteine 115 and histidine 255. An ACP-binding region spans residues 256–260 (QANFR). Residue asparagine 285 is part of the active site.

This sequence belongs to the thiolase-like superfamily. FabH family. Homodimer.

The protein resides in the cytoplasm. It carries out the reaction malonyl-[ACP] + acetyl-CoA + H(+) = 3-oxobutanoyl-[ACP] + CO2 + CoA. It functions in the pathway lipid metabolism; fatty acid biosynthesis. In terms of biological role, catalyzes the condensation reaction of fatty acid synthesis by the addition to an acyl acceptor of two carbons from malonyl-ACP. Catalyzes the first condensation reaction which initiates fatty acid synthesis and may therefore play a role in governing the total rate of fatty acid production. Possesses both acetoacetyl-ACP synthase and acetyl transacylase activities. Its substrate specificity determines the biosynthesis of branched-chain and/or straight-chain of fatty acids. This chain is Beta-ketoacyl-[acyl-carrier-protein] synthase III, found in Helicobacter pylori (strain J99 / ATCC 700824) (Campylobacter pylori J99).